The chain runs to 562 residues: Putative transport protein NT01EI_2530 (562 aa).

The next 6 helical transmembrane spans lie at 8–28 (LLTG…LCLG), 32–52 (LGSI…LLGQ), 66–86 (FMLF…SIFF), 94–114 (MLAL…GKLF), 118–138 (IGLT…LVGA), and 158–178 (HLSL…IFGA). RCK C-terminal domains are found at residues 202–288 (LDND…SFRN) and 290–373 (KEVF…RIGF). Transmembrane regions (helical) follow at residues 383–403 (LLAF…TFQF), 406–426 (FSFG…LGFL), 443–463 (MVKE…AGAG), 477–497 (IAGL…GAFV), and 541–561 (IANV…PGVV).

Belongs to the AAE transporter (TC 2.A.81) family. YbjL subfamily.

It localises to the cell membrane. The sequence is that of Putative transport protein NT01EI_2530 from Edwardsiella ictaluri (strain 93-146).